The sequence spans 180 residues: Sperm protein associated with the nucleus on the X chromosome N2 (180 aa).

Disordered regions lie at residues 1-46 (MEQP…KTKT) and 64-180 (NSNQ…GGED). Basic and acidic residues predominate over residues 10 to 26 (GEKRKSPCESNNKKNDE). Residues 82–169 (QEEEDEGLDS…SSQEDEDLDS (88 aa)) are compositionally biased toward acidic residues. Residues 170-180 (SEGSSQEGGED) show a composition bias toward low complexity.

Belongs to the SPAN-X family.

The polypeptide is Sperm protein associated with the nucleus on the X chromosome N2 (SPANXN2) (Homo sapiens (Human)).